We begin with the raw amino-acid sequence, 285 residues long: MATNEMWYETLHTGFGQYFSVDKIIYREKTDHQDLVIFENAALGRVMALDGVVQTTERDEFIYHEMMTHVPLLAHGAPKRVLIIGGGDGAMLREVCRHKNIEQITMVEIDAGVVTFCRQYLPNHNAGAYDDARFKLVIDDGVNFVNQTSDKFDVIISDCTDPIGPGESLFTSEFYQGCRRCLNQDGIFVAQNGVCFLQQDEAVNSHRKLSHYFGDVSFYQAAIPTYYGGIMTFAWASDNPALRQLDMATLTARFSEAGLNCRYYNPAIHTGSFALPQYLLNALAD.

The PABS domain occupies 5-238 (EMWYETLHTG…GIMTFAWASD (234 aa)). S-methyl-5'-thioadenosine is bound at residue Gln33. Spermidine is bound by residues His64 and Asp88. Residues Glu108 and 140–141 (DG) each bind S-methyl-5'-thioadenosine. Asp158 (proton acceptor) is an active-site residue. 158 to 161 (DCTD) provides a ligand contact to spermidine. An S-methyl-5'-thioadenosine-binding site is contributed by Pro165.

The protein belongs to the spermidine/spermine synthase family. In terms of assembly, homodimer or homotetramer.

It localises to the cytoplasm. It catalyses the reaction S-adenosyl 3-(methylsulfanyl)propylamine + putrescine = S-methyl-5'-thioadenosine + spermidine + H(+). It functions in the pathway amine and polyamine biosynthesis; spermidine biosynthesis; spermidine from putrescine: step 1/1. Catalyzes the irreversible transfer of a propylamine group from the amino donor S-adenosylmethioninamine (decarboxy-AdoMet) to putrescine (1,4-diaminobutane) to yield spermidine. This chain is Polyamine aminopropyltransferase, found in Erwinia tasmaniensis (strain DSM 17950 / CFBP 7177 / CIP 109463 / NCPPB 4357 / Et1/99).